A 739-amino-acid chain; its full sequence is MLCSWRVKLKLLLATITLAVLLSWLYLFVGSLEYGRFLLLPPCLGEQPSRDVEREALASQVRRVEEENQQLRMQLGQVQAEGSDGNPQWAASAEDGPPLGGERNNRTACPEQRMVRKCELLHVAIVCAGHNASRDVVTLVKSILFHRKNPLHFHFITDSVAHQILQTLFQSWMVPSIHVSFYNADDLKPEVSWIPNKHYSGIYGLMKLTLTKALPSNLSKVIVLDTDITFATDIAELWAVFGKFSEKQVIGLVENQSDWYLGNLWKNHKPWPALGRGFNTGVILLLLDRLRRLGWEQMWRLTAERELMSMLSTSLADQDIFNAVIKQNPALVYRLPCFWNVQLSDHTRSELCYTEVSDLKVIHWNSPKKLRVKNKHVEFFRNLYLTFLEYDGNLLRRELFGCASLPSPPSDQLQQALEELDEDDPCYDFRRQHLTQHRVHLFFLQYEFLALPNPTDVTLVAQLSMDRLQMLEAICKHWAGPISLALYMSDAEAQQFLRYAQASEVLSARRNVAYHIVYKEGQFYPINLLRNVALANTQTPYVFLTDIDFLPMYGLYDYLRNSIQQLELPHRKAALIVPAFETLHYRLTFPKSKAELLSMLDMGSLYTFRYHVWPKGHAPTDYAKWRTATVPYRVAWQPDFEPYVVVRRDCPKYDQRFVGFGWNKVSHIMELDAQEYELLVLPNAFMIHMPHAPSFDISKFRLSAGYRGCLQTLREEFHQDLSRKYGAAALKYLTAERNL.

The Cytoplasmic portion of the chain corresponds to 1 to 10 (MLCSWRVKLK). The helical; Signal-anchor for type II membrane protein transmembrane segment at 11-31 (LLLATITLAVLLSWLYLFVGS) threads the bilayer. Residues 32–739 (LEYGRFLLLP…LKYLTAERNL (708 aa)) are Lumenal-facing. A disordered region spans residues 80–105 (AEGSDGNPQWAASAEDGPPLGGERNN). Residues Asn-105, Asn-131, and Asn-217 are each glycosylated (N-linked (GlcNAc...) asparagine). Residues 121–396 (LHVAIVCAGH…FLEYDGNLLR (276 aa)) are xylosyltransferase activity. Residues Asp-225 and Asp-227 each contribute to the Mn(2+) site. A glycan (N-linked (GlcNAc...) asparagine) is linked at Asn-255. Residues 397-739 (RELFGCASLP…LKYLTAERNL (343 aa)) form a glucuronyltransferase activity region. Residues Asp-546 and Asp-548 each contribute to the Mn(2+) site.

The protein in the C-terminal section; belongs to the glycosyltransferase 49 family. It in the N-terminal section; belongs to the glycosyltransferase 8 family. Mn(2+) is required as a cofactor.

It is found in the golgi apparatus membrane. It carries out the reaction 3-O-[beta-D-GlcA-(1-&gt;3)-beta-D-Xyl-(1-&gt;4)-Rib-ol-P-Rib-ol-P-3-beta-D-GalNAc-(1-&gt;3)-beta-D-GlcNAc-(1-&gt;4)-(O-6-P-alpha-D-Man)]-Thr-[protein] + UDP-alpha-D-xylose = 3-O-[alpha-D-Xyl-(1-&gt;3)-beta-D-GlcA-(1-&gt;4)-beta-D-Xyl-(1-&gt;4)-Rib-ol-P-Rib-ol-P-3-beta-D-GalNAc-(1-&gt;3)-beta-D-GlcNAc-(1-&gt;4)-(O-6-P-alpha-D-Man)]-Thr-[protein] + UDP + H(+). It catalyses the reaction 3-O-{(1-&gt;[3)-alpha-D-Xyl-(1-&gt;3)-beta-D-GlcA-(1-&gt;](n)-4)-beta-D-Xyl-(1-&gt;4)-Rib-ol-P-Rib-ol-P-3-beta-D-GalNAc-(1-&gt;3)-beta-D-GlcNAc-(1-&gt;4)-O-6-P-alpha-D-Man}-L-Thr-[protein] + UDP-alpha-D-glucuronate = 3-O-{beta-D-GlcA-(1-&gt;[3)-alpha-D-Xyl-(1-&gt;3)-beta-D-GlcA-(1-&gt;](n)-4)-beta-D-Xyl-(1-&gt;4)-Rib-ol-P-Rib-ol-P-3-beta-D-GalNAc-(1-&gt;3)-beta-D-GlcNAc-(1-&gt;4)-O-6-P-alpha-D-Man}-L-Thr-[protein] + UDP + H(+). The catalysed reaction is 3-O-{beta-D-GlcA-(1-&gt;[3)-alpha-D-Xyl-(1-&gt;3)-beta-D-GlcA-(1-&gt;](n)-4)-beta-D-Xyl-(1-&gt;4)-Rib-ol-P-Rib-ol-P-3-beta-D-GalNAc-(1-&gt;3)-beta-D-GlcNAc-(1-&gt;4)-O-6-P-alpha-D-Man}-L-Thr-[protein] + UDP-alpha-D-xylose = 3-O-{(1-&gt;[3)-alpha-D-Xyl-(1-&gt;3)-beta-D-GlcA-(1-&gt;](n+1)-4)-beta-D-Xyl-(1-&gt;4)-Rib-ol-P-Rib-ol-P-3-beta-D-GalNAc-(1-&gt;3)-beta-D-GlcNAc-(1-&gt;4)-O-6-P-alpha-D-Man}-L-Thr-[protein] + UDP + H(+). It participates in protein modification; protein glycosylation. Functionally, bifunctional glycosyltransferase with both alpha-1,3-xylosyltransferase and beta-1,3-glucuronyltransferase activities involved in the maturation of alpha-dystroglycan (DAG1) by glycosylation leading to DAG1 binding to laminin G-like domain-containing extracellular proteins with high affinity and in a phosphorylated-O-mannosyl trisaccharide dependent manner. Elongates the glucuronyl-beta-1,4-xylose-beta disaccharide primer structure by adding repeating units [-3-Xylose-alpha-1,3-GlcA-beta-1-] to produce a heteropolysaccharide. Supports the maturation of DAG1 more effectively than LARGE1. In addition, can modify both heparan sulfate (HS)- and chondroitin/dermatan sulfate (CS/DS)-proteoglycans (PGs), namely GPC4, with a glycosaminoglycan (GAG)-like polysaccharide composed of xylose and glucuronic acid to confer laminin binding. This Gallus gallus (Chicken) protein is Xylosyl- and glucuronyltransferase LARGE2s.